Consider the following 723-residue polypeptide: Nuclear intron maturase 3, mitochondrial (723 aa).

The N-terminal 26 residues, 1–26 (MVLRLRVHSFYNRGISFLVSSSLRNL), are a transit peptide targeting the mitochondrion. The intron maturase type-2; degenerate stretch occupies residues 532–597 (VSAPEELVRK…HYTKDLRVSD (66 aa)). A THAP-type zinc finger spans residues 646 to 700 (CAASFCERSDTIMHRVHLLQNRLHINPLDEEKWVPGMGTIHSALNRKCLPLCSTH).

The protein belongs to the plant nuclear intron maturase (nMat) family.

The protein localises to the mitochondrion. Its function is as follows. Nuclear-encoded maturase required for splicing of group-II introns in mitochondria. Necessary for mitochondrial biogenesis during early developmental stages. In Arabidopsis thaliana (Mouse-ear cress), this protein is Nuclear intron maturase 3, mitochondrial.